The chain runs to 341 residues: Mitochondrial dimethyladenosine transferase 1 (341 aa).

The N-terminal 27 residues, 1 to 27 (MASSRTLGTFRLPPLPTIREIIKLFRL), are a transit peptide targeting the mitochondrion. Residues L38, G63, E85, K86, D111, V112, and N141 each contribute to the S-adenosyl-L-methionine site.

The protein belongs to the class I-like SAM-binding methyltransferase superfamily. rRNA adenine N(6)-methyltransferase family. KsgA subfamily. Interacts with mitochondrial RNA polymerase POLRMT. Interacts with TFAM. Bound to the maturing mtSSU until the late stages of assembly.

The protein resides in the mitochondrion. It carries out the reaction adenosine(N)/adenosine(N+1) in rRNA + 4 S-adenosyl-L-methionine = N(6)-dimethyladenosine(N)/N(6)-dimethyladenosine(N+1) in rRNA + 4 S-adenosyl-L-homocysteine + 4 H(+). Mitochondrial methyltransferase which uses S-adenosyl methionine to dimethylate two highly conserved adjacent adenosine residues (A1583 and A1584) within the loop of helix 45 at the 3-prime end of 12S rRNA, thereby regulating the assembly or stability of the small subunit of the mitochondrial ribosome. Also required for basal transcription of mitochondrial DNA, probably via its interaction with POLRMT and TFAM. Stimulates transcription independently of the methyltransferase activity. In Bos taurus (Bovine), this protein is Mitochondrial dimethyladenosine transferase 1 (TFB1M).